The sequence spans 286 residues: Pantothenate synthetase (286 aa).

Position 30 to 37 (30 to 37 (MGNLHDGH)) interacts with ATP. The active-site Proton donor is the H37. Q61 serves as a coordination point for (R)-pantoate. Q61 lines the beta-alanine pocket. 149-152 (GEKD) contributes to the ATP binding site. Q155 is a binding site for (R)-pantoate. ATP-binding positions include V178 and 186–189 (LSSR).

This sequence belongs to the pantothenate synthetase family. As to quaternary structure, homodimer.

The protein resides in the cytoplasm. It carries out the reaction (R)-pantoate + beta-alanine + ATP = (R)-pantothenate + AMP + diphosphate + H(+). The protein operates within cofactor biosynthesis; (R)-pantothenate biosynthesis; (R)-pantothenate from (R)-pantoate and beta-alanine: step 1/1. Functionally, catalyzes the condensation of pantoate with beta-alanine in an ATP-dependent reaction via a pantoyl-adenylate intermediate. This Edwardsiella ictaluri (strain 93-146) protein is Pantothenate synthetase.